We begin with the raw amino-acid sequence, 160 residues long: Protein-export protein SecB (160 aa).

The protein belongs to the SecB family. As to quaternary structure, homotetramer, a dimer of dimers. One homotetramer interacts with 1 SecA dimer.

It is found in the cytoplasm. Its function is as follows. One of the proteins required for the normal export of preproteins out of the cell cytoplasm. It is a molecular chaperone that binds to a subset of precursor proteins, maintaining them in a translocation-competent state. It also specifically binds to its receptor SecA. This Burkholderia multivorans (strain ATCC 17616 / 249) protein is Protein-export protein SecB.